The chain runs to 494 residues: Chromosomal replication initiator protein DnaA (494 aa).

Positions 1 to 103 are domain I, interacts with DnaA modulators; that stretch reads MTTDPDPPFV…PVSDESDSGS (103 aa). Residues 94 to 117 form a disordered region; it reads PVSDESDSGSVASPAPVAAADPDD. The span at 101-113 shows a compositional bias: low complexity; it reads SGSVASPAPVAAA. Residues 104–153 are domain II; the sequence is VASPAPVAAADPDDDVVDDDLAARASAEESWPSYFTNRANRAAEDDATSV. Positions 154–370 are domain III, AAA+ region; sequence NLNRRYTFDT…GALIRVTAFA (217 aa). ATP-binding residues include G198, G200, K201, and T202. The interval 371–494 is domain IV, binds dsDNA; it reads SLNKTPIDKS…TTRIRQRAKR (124 aa).

The protein belongs to the DnaA family. In terms of assembly, oligomerizes as a right-handed, spiral filament on DNA at oriC.

The protein localises to the cytoplasm. Its function is as follows. Plays an essential role in the initiation and regulation of chromosomal replication. ATP-DnaA binds to the origin of replication (oriC) to initiate formation of the DNA replication initiation complex once per cell cycle. Binds the DnaA box (a 9 base pair repeat at the origin) and separates the double-stranded (ds)DNA. Forms a right-handed helical filament on oriC DNA; dsDNA binds to the exterior of the filament while single-stranded (ss)DNA is stabiized in the filament's interior. The ATP-DnaA-oriC complex binds and stabilizes one strand of the AT-rich DNA unwinding element (DUE), permitting loading of DNA polymerase. After initiation quickly degrades to an ADP-DnaA complex that is not apt for DNA replication. Binds acidic phospholipids. The sequence is that of Chromosomal replication initiator protein DnaA from Mycolicibacterium vanbaalenii (strain DSM 7251 / JCM 13017 / BCRC 16820 / KCTC 9966 / NRRL B-24157 / PYR-1) (Mycobacterium vanbaalenii).